A 524-amino-acid polypeptide reads, in one-letter code: Ribonuclease Y (524 aa).

The chain crosses the membrane as a helical span at residues 3–23; sequence IVINLFLLVPASIVFFAAGFF. Residues 96-127 form a disordered region; it reads QQREGQLKKQAQDNRDMERRLQDQRKENEQVQ. Basic and acidic residues predominate over residues 100 to 124; the sequence is GQLKKQAQDNRDMERRLQDQRKENE. The 67-residue stretch at 214 to 280 folds into the KH domain; sequence ALSVVHIQTD…KLTLQKLLSE (67 aa). The HD domain maps to 340–432; sequence LLQHSREVAM…VDAANVISLS (93 aa).

It belongs to the RNase Y family.

It is found in the cell membrane. Endoribonuclease that initiates mRNA decay. This Chlorobium phaeovibrioides (strain DSM 265 / 1930) (Prosthecochloris vibrioformis (strain DSM 265)) protein is Ribonuclease Y.